Reading from the N-terminus, the 434-residue chain is Gamma-glutamyl phosphate reductase (434 aa).

The span at 1 to 11 shows a compositional bias: polar residues; sequence MTNSNEAQENA. Positions 1–26 are disordered; it reads MTNSNEAQENALSPERQAERDEVLAK. A compositionally biased stretch (basic and acidic residues) spans 16 to 25; the sequence is RQAERDEVLA.

This sequence belongs to the gamma-glutamyl phosphate reductase family.

Its subcellular location is the cytoplasm. The enzyme catalyses L-glutamate 5-semialdehyde + phosphate + NADP(+) = L-glutamyl 5-phosphate + NADPH + H(+). It functions in the pathway amino-acid biosynthesis; L-proline biosynthesis; L-glutamate 5-semialdehyde from L-glutamate: step 2/2. Catalyzes the NADPH-dependent reduction of L-glutamate 5-phosphate into L-glutamate 5-semialdehyde and phosphate. The product spontaneously undergoes cyclization to form 1-pyrroline-5-carboxylate. This chain is Gamma-glutamyl phosphate reductase, found in Corynebacterium jeikeium (strain K411).